A 142-amino-acid chain; its full sequence is Large ribosomal subunit protein uL11 (142 aa).

Belongs to the universal ribosomal protein uL11 family. As to quaternary structure, part of the ribosomal stalk of the 50S ribosomal subunit. Interacts with L10 and the large rRNA to form the base of the stalk. L10 forms an elongated spine to which L12 dimers bind in a sequential fashion forming a multimeric L10(L12)X complex. In terms of processing, one or more lysine residues are methylated.

In terms of biological role, forms part of the ribosomal stalk which helps the ribosome interact with GTP-bound translation factors. This chain is Large ribosomal subunit protein uL11, found in Solibacter usitatus (strain Ellin6076).